The following is a 51-amino-acid chain: MRETIKLVSSAKTGHFYTATKNKRLHPEKVEVKKFDPVVRKHVMYKEVKIK.

Belongs to the bacterial ribosomal protein bL33 family.

In Vesicomyosocius okutanii subsp. Calyptogena okutanii (strain HA), this protein is Large ribosomal subunit protein bL33.